Consider the following 234-residue polypeptide: Thymidylate kinase (234 aa).

Residue 21 to 28 coordinates ATP; the sequence is GGEGTGKS.

Belongs to the thymidylate kinase family.

The catalysed reaction is dTMP + ATP = dTDP + ADP. Functionally, phosphorylation of dTMP to form dTDP in both de novo and salvage pathways of dTTP synthesis. This is Thymidylate kinase from Rhizobium meliloti (strain 1021) (Ensifer meliloti).